The primary structure comprises 113 residues: Ribosome-binding factor A (113 aa).

Belongs to the RbfA family. As to quaternary structure, monomer. Binds 30S ribosomal subunits, but not 50S ribosomal subunits or 70S ribosomes.

It is found in the cytoplasm. One of several proteins that assist in the late maturation steps of the functional core of the 30S ribosomal subunit. Associates with free 30S ribosomal subunits (but not with 30S subunits that are part of 70S ribosomes or polysomes). Required for efficient processing of 16S rRNA. May interact with the 5'-terminal helix region of 16S rRNA. The polypeptide is Ribosome-binding factor A (Lactococcus lactis subsp. cremoris (Streptococcus cremoris)).